The primary structure comprises 479 residues: Adenosylhomocysteinase (479 aa).

The substrate site is built by Thr56, Asp133, and Glu199. An NAD(+)-binding site is contributed by 200-202; sequence TTT. Lys229 and Asp233 together coordinate substrate. NAD(+) is bound by residues Asn234, 263–268, Glu286, Asn321, 342–344, and Asn390; these read GYGDVG and IGH.

This sequence belongs to the adenosylhomocysteinase family. As to quaternary structure, homotetramer. It depends on NAD(+) as a cofactor.

It carries out the reaction S-adenosyl-L-homocysteine + H2O = L-homocysteine + adenosine. Its pathway is amino-acid biosynthesis; L-homocysteine biosynthesis; L-homocysteine from S-adenosyl-L-homocysteine: step 1/1. Its function is as follows. Adenosylhomocysteine is a competitive inhibitor of S-adenosyl-L-methionine-dependent methyl transferase reactions; therefore adenosylhomocysteinase may play a key role in the control of methylations via regulation of the intracellular concentration of adenosylhomocysteine. In Plasmodium chabaudi chabaudi, this protein is Adenosylhomocysteinase.